A 172-amino-acid polypeptide reads, in one-letter code: Ribosomally synthesized cyclic peptide phomopsin precursor phomA (172 aa).

The N-terminal stretch at 1–18 (MRFTPAIVIAAFCSLAVA) is a signal peptide. Propeptides lie at residues 19–35 (APAA…AVED), 42–50 (KKRGEAVED), 57–65 (KKRGEAVED), 72–79 (KRGEAVED), 86–93 (KRGEAVED), 100–108 (KKRGEAVED), 115–122 (KRGEAVED), 129–137 (RKRGEAVED), 144–151 (KRGEAVED), 158–165 (KRGEAVED), and Lys172.

In terms of processing, phomA is processed by several endopeptidases including kexin proteases as well as the cluster-specific S41 family peptidase phomP1 and the oligopeptidase phomG to produce 10 identical copies of the hexapeptide Tyr-Val-Ile-Pro-Ile-Asp, that is further modified to yield phomapsins. The timing and order of proteolysis of the phomA precursor and PTMs are still unknown. Two tyrosinase-like enzymes, phomQ1 and phomQ2, catalyze the chlorination and hydroxylation of Tyr, respectively. PhomYb, is proposed to be involved in the construction of the macrocyclic structure. The other 4 ustYa family proteins may be involved in PTMs that generate the unique structure of phomopsin A. PhomYa is required for the hydroxylation of C-beta of Tyr. PhomYc, phomYd, and phomYe are responsible for the biosynthesis of 2,3-dehydroisoleucine (dIle), 2,3-dehydroaspartic acid (dAsp), and 3,4-dehydroproline (dPro), respectively. While dIle formation by phomYc is indispensable for the installation of dAsp by phomYd, the order of the other PTMs have not been elucidated yet. Most of the biosynthetic enzymes likely have broad substrate specificity, and thus, there might be a metabolic grid from a precursor to phomopsin A. The enzyme(s) responsible for the biosynthesis of 3,4-dehydrovaline (dVal) have also not been identified yet. Finally, phomM acts as an S-adenosylmethionine-dependent alpha-N-methyltransferase that catalyzes two successive N-methylation reactions, converting N-desmethyl-phomopsin A to phomopsin A and phomopsin A further to an N,N-dimethylated congener called phomopsin E.

Its pathway is mycotoxin biosynthesis. In terms of biological role, ribosomally synthesized cyclic peptide phomopsin precursor; part of the gene cluster that mediates the biosynthesis of the phomopsins, a group of hexapeptide mycotoxins which infects lupins and causes lupinosis disease in livestock. The phomA translated product contains a 10-fold repeated peptide embedding the hexapeptide Tyr-Val-Ile-Pro-Ile-Asp, that is converted into phomapsins. After being excised from the precursor peptide by kexin proteases, the core peptides are cyclized and modified post-translationally by enzymes encoded within the corresponding gene cluster. The protein is Ribosomally synthesized cyclic peptide phomopsin precursor phomA of Diaporthe leptostromiformis (Lupinosis disease fungus).